The primary structure comprises 339 residues: Anthranilate phosphoribosyltransferase (339 aa).

5-phospho-alpha-D-ribose 1-diphosphate is bound by residues glycine 79, 82–83 (GD), threonine 87, 89–92 (NVST), 107–115 (KHGNRAVSS), and serine 119. Glycine 79 is a binding site for anthranilate. Position 91 (serine 91) interacts with Mg(2+). Asparagine 110 contributes to the anthranilate binding site. An anthranilate-binding site is contributed by arginine 165. Mg(2+) contacts are provided by aspartate 224 and glutamate 225.

This sequence belongs to the anthranilate phosphoribosyltransferase family. As to quaternary structure, homodimer. It depends on Mg(2+) as a cofactor.

It catalyses the reaction N-(5-phospho-beta-D-ribosyl)anthranilate + diphosphate = 5-phospho-alpha-D-ribose 1-diphosphate + anthranilate. It functions in the pathway amino-acid biosynthesis; L-tryptophan biosynthesis; L-tryptophan from chorismate: step 2/5. Functionally, catalyzes the transfer of the phosphoribosyl group of 5-phosphorylribose-1-pyrophosphate (PRPP) to anthranilate to yield N-(5'-phosphoribosyl)-anthranilate (PRA). This chain is Anthranilate phosphoribosyltransferase, found in Geobacillus stearothermophilus (Bacillus stearothermophilus).